Reading from the N-terminus, the 83-residue chain is Protein L83L (83 aa).

Positions 1–26 (MDTSLKKNNGALEADNKNYQNYKDEP) are disordered.

The protein belongs to the asfivirus L83L family. Interacts with host IL1B.

Its subcellular location is the host cytoplasm. Its function is as follows. May subvert the host innate immune response by interacting with host IL1B and interfering with its function. The protein is Protein L83L of Ornithodoros (relapsing fever ticks).